We begin with the raw amino-acid sequence, 143 residues long: MAIERTFSIIKPNAVAKNVIGSIFARFEAAGFKIVGTKMLHLTVEQARGFYAEHDGKPFFDGLVEFMTSGPIVVSVLEGENAVQRHRDLLGATNPANALAGTLRADYADSLTENGTHGSDSVESAAREIAYFFGEGEVCPRTR.

Positions 11, 59, 87, 93, 104, and 114 each coordinate ATP. The active-site Pros-phosphohistidine intermediate is His117.

Belongs to the NDK family. In terms of assembly, homotetramer. Mg(2+) serves as cofactor.

It is found in the cytoplasm. It carries out the reaction a 2'-deoxyribonucleoside 5'-diphosphate + ATP = a 2'-deoxyribonucleoside 5'-triphosphate + ADP. The enzyme catalyses a ribonucleoside 5'-diphosphate + ATP = a ribonucleoside 5'-triphosphate + ADP. Its function is as follows. Major role in the synthesis of nucleoside triphosphates other than ATP. The ATP gamma phosphate is transferred to the NDP beta phosphate via a ping-pong mechanism, using a phosphorylated active-site intermediate. This chain is Nucleoside diphosphate kinase, found in Escherichia coli O7:K1 (strain IAI39 / ExPEC).